Reading from the N-terminus, the 111-residue chain is Iron-sulfur cluster insertion protein ErpA (111 aa).

Iron-sulfur cluster contacts are provided by cysteine 39, cysteine 103, and cysteine 105.

It belongs to the HesB/IscA family. Homodimer. The cofactor is iron-sulfur cluster.

In terms of biological role, required for insertion of 4Fe-4S clusters for at least IspG. The chain is Iron-sulfur cluster insertion protein ErpA from Acinetobacter baumannii (strain AB307-0294).